Consider the following 111-residue polypeptide: Cell cycle protein GpsB (111 aa).

The stretch at 38-72 (IKDYEAFHKEFEQLKQQNARLKRELEEQKLAATQV) forms a coiled coil.

It belongs to the GpsB family. In terms of assembly, forms polymers through the coiled coil domains. Interacts with PBP1, MreC and EzrA.

The protein localises to the cytoplasm. Divisome component that associates with the complex late in its assembly, after the Z-ring is formed, and is dependent on DivIC and PBP2B for its recruitment to the divisome. Together with EzrA, is a key component of the system that regulates PBP1 localization during cell cycle progression. Its main role could be the removal of PBP1 from the cell pole after pole maturation is completed. Also contributes to the recruitment of PBP1 to the division complex. Not essential for septum formation. The protein is Cell cycle protein GpsB of Bacillus cereus (strain ATCC 10987 / NRS 248).